The sequence spans 250 residues: MTTNKDVECLVEPTSNISITEENKNVTSETTTTTNNTQNKETETTDNINKEETADKENKEEQQQEENPENLIKHPLQNRWSLWYDYQSGKINPEHWVDSLKKVISFDSVEDFWCVFNNLPNVSNLKQGSSYHLFKDDIEPKWEHESNKRGGKWFVMVKDKSRCDNQWLQSVMACVGETFDSSDEICGIVYNSRKNGDKISVWTKTAQDEKATRDVGNCLKKILEIDQTIQYTPHEDFIRSSKGSKNLYEC.

Residues 1–72 (MTTNKDVECL…QQEENPENLI (72 aa)) form a disordered region. A compositionally biased stretch (low complexity) spans 25-39 (NVTSETTTTTNNTQN). Basic and acidic residues predominate over residues 40–62 (KETETTDNINKEETADKENKEEQ). Residues 96–97 (WV), 142–143 (WE), 193–198 (RKNGDK), and 239–241 (RSS) each bind mRNA.

The protein belongs to the eukaryotic initiation factor 4E family. As to quaternary structure, eIF4F is a multi-subunit complex, the composition of which varies with external and internal environmental conditions. It is composed of at least eif4a, eif4e and eif4g.

Recognizes and binds the 7-methylguanosine-containing mRNA cap during an early step in the initiation of protein synthesis and facilitates ribosome binding by inducing the unwinding of the mRNAs secondary structures. This is Eukaryotic translation initiation factor 4E (eif4e) from Dictyostelium discoideum (Social amoeba).